A 143-amino-acid polypeptide reads, in one-letter code: MESTLGSDLARLVRIWRALIDYRLKPLELTQTHWVTLYNISRLPQEQSQIQLAKAIGIEQPSLVRTLDQLEEKKLITRHTCANDRRAKRIKLTEDSASVIRELDGVIESTRNEILGGISREELAFLSTLVQKLEQNIIQLQSR.

The 134-residue stretch at 2 to 135 (ESTLGSDLAR…LSTLVQKLEQ (134 aa)) folds into the HTH marR-type domain. The segment at residues 49–72 (QIQLAKAIGIEQPSLVRTLDQLEE) is a DNA-binding region (H-T-H motif).

The protein belongs to the SlyA family. In terms of assembly, homodimer.

Transcription regulator that can specifically activate or repress expression of target genes. Regulates the cpm operon, which contains cpmA, cpmB, cpmC, cpmD, cpmE, cpmF, cpmG and cpmH, involved in carbapenem-like antibiotic production. This chain is Transcriptional regulator SlyA, found in Photorhabdus laumondii subsp. laumondii (strain DSM 15139 / CIP 105565 / TT01) (Photorhabdus luminescens subsp. laumondii).